Reading from the N-terminus, the 1828-residue chain is AT-rich interactive domain-containing protein 2 (1828 aa).

The residue at position 2 (alanine 2) is an N-acetylalanine. Residue serine 4 is modified to Phosphoserine. Glycyl lysine isopeptide (Lys-Gly) (interchain with G-Cter in SUMO2) cross-links involve residues lysine 7, lysine 15, and lysine 119. The ARID domain occupies arginine 13–histidine 105. The LXXLL signature appears at leucine 313–leucine 317. The segment at residues alanine 524–alanine 603 is a DNA-binding region (RFX-type winged-helix). Residue lysine 555 forms a Glycyl lysine isopeptide (Lys-Gly) (interchain with G-Cter in SUMO2) linkage. A phosphoserine mark is found at serine 631 and serine 635. Phosphothreonine is present on threonine 653. Serine 689 bears the Phosphoserine mark. A Phosphothreonine modification is found at threonine 692. 6 disordered regions span residues threonine 824–glutamine 843, leucine 962–valine 1028, lysine 1245–aspartate 1339, lysine 1360–valine 1462, histidine 1483–threonine 1503, and serine 1566–proline 1618. Polar residues predominate over residues alanine 987 to arginine 1011. Residues glutamine 1012 to valine 1028 show a composition bias toward low complexity. The span at lysine 1245–valine 1259 shows a compositional bias: basic and acidic residues. The segment covering arginine 1267 to glutamine 1283 has biased composition (polar residues). At serine 1294 the chain carries Phosphoserine. 2 stretches are compositionally biased toward polar residues: residues aspartate 1295–proline 1320 and leucine 1366–valine 1379. A Phosphoserine modification is found at serine 1385. Composition is skewed to polar residues over residues glutamine 1390–threonine 1400 and glycine 1419–glutamate 1428. Low complexity predominate over residues serine 1453–valine 1462. Residue serine 1491 is modified to Phosphoserine. Polar residues-rich tracts occupy residues serine 1491–threonine 1503 and alanine 1567–asparagine 1586. Low complexity predominate over residues alanine 1594 to glutamine 1614. A C2H2-type zinc finger spans residues phenylalanine 1626–histidine 1651. Residues lysine 1695, lysine 1710, and lysine 1725 each participate in a glycyl lysine isopeptide (Lys-Gly) (interchain with G-Cter in SUMO2) cross-link. Positions aspartate 1697–alanine 1726 are disordered. The segment covering valine 1702–valine 1714 has biased composition (polar residues).

It belongs to the RFX family. As to quaternary structure, component of the SWI/SNF-B (PBAF) chromatin remodeling complex, at least composed of SMARCA4/BRG1, SMARCB1/BAF47/SNF5, ACTL6A/BAF53A or ACTL6B/BAF53B, SMARCE1/BAF57, SMARCD1/BAF60A, SMARCD2/BAF60B, perhaps SMARCD3/BAF60C, SMARCC1/BAF155, SMARCC2/BAF170, PBRM1/BAF180, ARID2/BAF200 and actin. Interacts with SRF. Forms complexes with SRF and SRF cofactors MYOCD, NKX2-5 and SRFBP1. Highly expressed in testis, expressed in heart, liver and kidney.

It localises to the nucleus. Involved in transcriptional activation and repression of select genes by chromatin remodeling (alteration of DNA-nucleosome topology). Required for the stability of the SWI/SNF chromatin remodeling complex SWI/SNF-B (PBAF). May be involved in targeting the complex to different genes. May be involved in regulating transcriptional activation of cardiac genes. The chain is AT-rich interactive domain-containing protein 2 from Mus musculus (Mouse).